Consider the following 183-residue polypeptide: Putative 3-methyladenine DNA glycosylase (183 aa).

This sequence belongs to the DNA glycosylase MPG family.

This is Putative 3-methyladenine DNA glycosylase from Rickettsia peacockii (strain Rustic).